Consider the following 533-residue polypeptide: Adenosine deaminase (533 aa).

Residues 1-19 (MKILLAVVFVLNLTNLAVP) form the signal peptide.

This sequence belongs to the metallo-dependent hydrolases superfamily. Adenosine and AMP deaminases family. ADGF subfamily. It depends on Zn(2+) as a cofactor. Post-translationally, proteolytically cleaved by human mast cell tryptase and chymase. Female salivary gland (at protein level).

Its subcellular location is the secreted. It carries out the reaction adenosine + H2O + H(+) = inosine + NH4(+). It catalyses the reaction 2'-deoxyadenosine + H2O + H(+) = 2'-deoxyinosine + NH4(+). Catalyzes the deamination of adenosine to inosine and deoxyadenosine to deoxyinosine. Induces degranulation of host mast cells, and secretion of tryptase and IL6. Modulates enzymatic activities of human tryptase and chymase. Induces release of cytokines, such as IL1B, IL6, TNF, CCL2, IFN-beta (INFB1) and ISG15, from host monocytes and macrophages. Activates host NF-kappa-B signaling pathway in TAK1/MAP3K7-dependent manner. In terms of biological role, (Microbial infection) Promotes replication of dengue virus type 2 in host cells probably via modulation of cytokine production in host macrophages and monocytes. The protein is Adenosine deaminase of Aedes albopictus (Asian tiger mosquito).